A 489-amino-acid polypeptide reads, in one-letter code: ATF/CREB activator 1 (489 aa).

In terms of domain architecture, bZIP spans 384–447; it reads AWKRARLLER…QKMKKISRLH (64 aa). Positions 386–406 are basic motif; sequence KRARLLERNRIAASKCRQRKK. Positions 412–419 are leucine-zipper; it reads LQREFDQI.

Belongs to the bZIP family.

Its subcellular location is the nucleus. In terms of biological role, transcriptional activator of promoters containing ATF/CREB sites. Can independently stimulate transcription through ATF/CREB sites. Important for a variety of biological functions including growth on non-optimal carbon sources. Regulates the expression of COS8. Has efficient silencing blocking activities. This chain is ATF/CREB activator 1 (ACA1), found in Saccharomyces cerevisiae (strain ATCC 204508 / S288c) (Baker's yeast).